The sequence spans 104 residues: L-rhamnose mutarotase (104 aa).

Tyr-18 contributes to the substrate binding site. His-22 functions as the Proton donor in the catalytic mechanism. Substrate is bound by residues Tyr-41 and 76-77 (WW).

It belongs to the rhamnose mutarotase family. In terms of assembly, homodimer.

It is found in the cytoplasm. The catalysed reaction is alpha-L-rhamnose = beta-L-rhamnose. It functions in the pathway carbohydrate metabolism; L-rhamnose metabolism. In terms of biological role, involved in the anomeric conversion of L-rhamnose. In Shouchella clausii (strain KSM-K16) (Alkalihalobacillus clausii), this protein is L-rhamnose mutarotase.